A 287-amino-acid polypeptide reads, in one-letter code: Ribonuclease HII (287 aa).

Residues 61–287 (ALQIGVDEAG…FAPVRKALES (227 aa)) enclose the RNase H type-2 domain. Positions 67, 68, and 186 each coordinate a divalent metal cation.

Belongs to the RNase HII family. Requires Mn(2+) as cofactor. The cofactor is Mg(2+).

Its subcellular location is the cytoplasm. The catalysed reaction is Endonucleolytic cleavage to 5'-phosphomonoester.. Its function is as follows. Endonuclease that specifically degrades the RNA of RNA-DNA hybrids. The sequence is that of Ribonuclease HII from Psychrobacter arcticus (strain DSM 17307 / VKM B-2377 / 273-4).